The primary structure comprises 97 residues: Citrate lyase acyl carrier protein (97 aa).

S14 is subject to O-(phosphoribosyl dephospho-coenzyme A)serine.

It belongs to the CitD family. Oligomer with a subunit composition of (alpha,beta,gamma)6.

Its subcellular location is the cytoplasm. Its function is as follows. Covalent carrier of the coenzyme of citrate lyase. The protein is Citrate lyase acyl carrier protein of Klebsiella pneumoniae subsp. pneumoniae (strain ATCC 700721 / MGH 78578).